The sequence spans 171 residues: 3-hydroxydecanoyl-[acyl-carrier-protein] dehydratase (171 aa).

Residue His70 is part of the active site.

It belongs to the thioester dehydratase family. FabA subfamily. In terms of assembly, homodimer.

Its subcellular location is the cytoplasm. It catalyses the reaction a (3R)-hydroxyacyl-[ACP] = a (2E)-enoyl-[ACP] + H2O. It carries out the reaction (3R)-hydroxydecanoyl-[ACP] = (2E)-decenoyl-[ACP] + H2O. The catalysed reaction is (2E)-decenoyl-[ACP] = (3Z)-decenoyl-[ACP]. It participates in lipid metabolism; fatty acid biosynthesis. In terms of biological role, necessary for the introduction of cis unsaturation into fatty acids. Catalyzes the dehydration of (3R)-3-hydroxydecanoyl-ACP to E-(2)-decenoyl-ACP and then its isomerization to Z-(3)-decenoyl-ACP. Can catalyze the dehydratase reaction for beta-hydroxyacyl-ACPs with saturated chain lengths up to 16:0, being most active on intermediate chain length. The protein is 3-hydroxydecanoyl-[acyl-carrier-protein] dehydratase of Shewanella halifaxensis (strain HAW-EB4).